Reading from the N-terminus, the 236-residue chain is Adenosine 5'-phosphosulfate reductase 2 (236 aa).

Positions 122, 123, 205, and 208 each coordinate [4Fe-4S] cluster. The disordered stretch occupies residues N216–E236. The Nucleophile; cysteine thiosulfonate intermediate role is filled by C231.

Belongs to the PAPS reductase family. CysH subfamily. It depends on [4Fe-4S] cluster as a cofactor.

It localises to the cytoplasm. It carries out the reaction [thioredoxin]-disulfide + sulfite + AMP + 2 H(+) = adenosine 5'-phosphosulfate + [thioredoxin]-dithiol. It participates in sulfur metabolism; hydrogen sulfide biosynthesis; sulfite from sulfate. Functionally, catalyzes the formation of sulfite from adenosine 5'-phosphosulfate (APS) using thioredoxin as an electron donor. The polypeptide is Adenosine 5'-phosphosulfate reductase 2 (Bacillus subtilis (strain 168)).